Here is a 186-residue protein sequence, read N- to C-terminus: dCTP deaminase (186 aa).

107–112 (KSTYAR) is a binding site for dCTP. Catalysis depends on E133, which acts as the Proton donor/acceptor. Residues Q152, Y166, and Q176 each contribute to the dCTP site.

Belongs to the dCTP deaminase family. As to quaternary structure, homotrimer.

The enzyme catalyses dCTP + H2O + H(+) = dUTP + NH4(+). It functions in the pathway pyrimidine metabolism; dUMP biosynthesis; dUMP from dCTP (dUTP route): step 1/2. In terms of biological role, catalyzes the deamination of dCTP to dUTP. In Campylobacter curvus (strain 525.92), this protein is dCTP deaminase.